The primary structure comprises 478 residues: NADH oxidase (478 aa).

FAD contacts are provided by residues 8–12, Asp33, Cys43, Val80, 111–114, Lys149, and Tyr177; these read GINHA and ASGA. His11 serves as the catalytic Proton acceptor. The active-site Redox-active is Cys43. Position 43 is a cysteine sulfinic acid (-SO2H) (Cys43). Residues 170–185, Asp197, and Gly264 each bind NAD(+); that span reads VAIVGSGYIGLELAEA. FAD is bound by residues 295 to 305, Leu322, Ala323, and Thr324; that span reads LNHKDVYVIGG. NAD(+) is bound at residue Ala353. An FAD-binding site is contributed by Phe450.

It belongs to the class-III pyridine nucleotide-disulfide oxidoreductase family. Requires FAD as cofactor.

The enzyme catalyses 2 NADH + O2 + 2 H(+) = 2 NAD(+) + 2 H2O. In terms of biological role, catalyzes the four-electron reduction of molecular oxygen to water. In Mycoplasma genitalium (strain ATCC 33530 / DSM 19775 / NCTC 10195 / G37) (Mycoplasmoides genitalium), this protein is NADH oxidase (nox).